We begin with the raw amino-acid sequence, 416 residues long: Probable protein phosphatase 2C 75 (416 aa).

Disordered stretches follow at residues 1 to 20 and 32 to 51; these read MTEI…SPTK and RRQA…DRTD. One can recognise a PPM-type phosphatase domain in the interval 108–411; sequence LYGIVSVMGR…DNISVVVIDL (304 aa). Residues Asp-149, Gly-150, Asp-337, and Asp-402 each coordinate Mn(2+).

The protein belongs to the PP2C family. Mg(2+) serves as cofactor. Requires Mn(2+) as cofactor.

The catalysed reaction is O-phospho-L-seryl-[protein] + H2O = L-seryl-[protein] + phosphate. It catalyses the reaction O-phospho-L-threonyl-[protein] + H2O = L-threonyl-[protein] + phosphate. Its function is as follows. Negative regulator of abscisic acid (ABA) responses during seed germination. In Arabidopsis thaliana (Mouse-ear cress), this protein is Probable protein phosphatase 2C 75 (AHG1).